Here is a 442-residue protein sequence, read N- to C-terminus: Trigger factor (442 aa).

Residues 163–248 (YDRVTINYCI…IIKIEKKQEL (86 aa)) enclose the PPIase FKBP-type domain.

The protein belongs to the FKBP-type PPIase family. Tig subfamily.

The protein localises to the cytoplasm. It carries out the reaction [protein]-peptidylproline (omega=180) = [protein]-peptidylproline (omega=0). Functionally, involved in protein export. Acts as a chaperone by maintaining the newly synthesized protein in an open conformation. Functions as a peptidyl-prolyl cis-trans isomerase. The polypeptide is Trigger factor (Buchnera aphidicola subsp. Acyrthosiphon pisum (strain Tuc7)).